The primary structure comprises 224 residues: 7-cyano-7-deazaguanine synthase (224 aa).

Residue 11 to 21 (FSGGQDSTTCL) participates in ATP binding. Zn(2+) is bound by residues Cys-190, Cys-199, Cys-202, and Cys-205.

The protein belongs to the QueC family. Zn(2+) is required as a cofactor.

It carries out the reaction 7-carboxy-7-deazaguanine + NH4(+) + ATP = 7-cyano-7-deazaguanine + ADP + phosphate + H2O + H(+). It functions in the pathway purine metabolism; 7-cyano-7-deazaguanine biosynthesis. Catalyzes the ATP-dependent conversion of 7-carboxy-7-deazaguanine (CDG) to 7-cyano-7-deazaguanine (preQ(0)). The sequence is that of 7-cyano-7-deazaguanine synthase from Parabacteroides distasonis (strain ATCC 8503 / DSM 20701 / CIP 104284 / JCM 5825 / NCTC 11152).